Consider the following 237-residue polypeptide: Glutathione S-transferase L1 (237 aa).

In terms of domain architecture, GST N-terminal spans 29 to 110 (GTTRLYISYT…YVDSNFDGPS (82 aa)). Glutathione contacts are provided by residues 39–40 (CP), 67–68 (NR), 81–82 (KV), and 94–95 (ES). The GST C-terminal domain maps to 112-232 (YPEDSAKREF…KTDSEYVVNY (121 aa)).

The protein belongs to the GST superfamily. Lambda family.

It localises to the cytoplasm. The protein resides in the cytosol. The catalysed reaction is RX + glutathione = an S-substituted glutathione + a halide anion + H(+). Its function is as follows. Catalyzes the glutathione-dependent reduction of S-glutathionylquercetin to quercetin. In vitro, possesses glutathione-dependent thiol transferase activity toward 2-hydroxyethyl disulfide (HED). This Arabidopsis thaliana (Mouse-ear cress) protein is Glutathione S-transferase L1 (GSTL1).